The chain runs to 91 residues: Non-specific lipid-transfer protein 1 (91 aa).

4 disulfide bridges follow: cysteine 4/cysteine 51, cysteine 14/cysteine 28, cysteine 29/cysteine 74, and cysteine 49/cysteine 88.

As to expression, expressed in seeds (at protein level).

Functionally, plant non-specific lipid-transfer proteins transfer phospholipids as well as galactolipids across membranes. May play a role in wax or cutin deposition in the cell walls of expanding epidermal cells and certain secretory tissues. Binds to both saturated and unsaturated lipids, with the highest binding efficiency for linoleic acid, followed by linolenic acid. The sequence is that of Non-specific lipid-transfer protein 1 from Foeniculum vulgare (Fennel).